The primary structure comprises 883 residues: N,N'-diacetylchitobiase (883 aa).

The signal sequence occupies residues 1–17 (MLKHSLIAASVITTLAG). Cys-18 carries the N-palmitoyl cysteine lipid modification. A lipid anchor (S-diacylglycerol cysteine) is attached at Cys-18. 3 disulfide bridges follow: Cys-54–Cys-64, Cys-394–Cys-402, and Cys-502–Cys-577. The active-site Proton donor is Glu-537.

It belongs to the glycosyl hydrolase 20 family. This protein is probably a lipoprotein, its processing is inhibited by globomycin.

It is found in the cell outer membrane. The enzyme catalyses Hydrolysis of terminal non-reducing N-acetyl-D-hexosamine residues in N-acetyl-beta-D-hexosaminides.. It participates in glycan degradation; chitin degradation. In terms of biological role, hydrolysis of terminal, non-reducing N-acetyl-beta-D-glucosamine residues in chitobiose and higher analogs, and in glycoproteins. This Vibrio harveyi (Beneckea harveyi) protein is N,N'-diacetylchitobiase (chb).